The primary structure comprises 172 residues: 3-hydroxydecanoyl-[acyl-carrier-protein] dehydratase (172 aa).

His-71 is a catalytic residue.

It belongs to the thioester dehydratase family. FabA subfamily. Homodimer.

The protein resides in the cytoplasm. The enzyme catalyses a (3R)-hydroxyacyl-[ACP] = a (2E)-enoyl-[ACP] + H2O. It catalyses the reaction (3R)-hydroxydecanoyl-[ACP] = (2E)-decenoyl-[ACP] + H2O. The catalysed reaction is (2E)-decenoyl-[ACP] = (3Z)-decenoyl-[ACP]. Its pathway is lipid metabolism; fatty acid biosynthesis. Its function is as follows. Necessary for the introduction of cis unsaturation into fatty acids. Catalyzes the dehydration of (3R)-3-hydroxydecanoyl-ACP to E-(2)-decenoyl-ACP and then its isomerization to Z-(3)-decenoyl-ACP. Can catalyze the dehydratase reaction for beta-hydroxyacyl-ACPs with saturated chain lengths up to 16:0, being most active on intermediate chain length. This Escherichia coli O127:H6 (strain E2348/69 / EPEC) protein is 3-hydroxydecanoyl-[acyl-carrier-protein] dehydratase.